The primary structure comprises 178 residues: Cytochrome b6-f complex iron-sulfur subunit (178 aa).

The helical transmembrane segment at 20 to 42 (LLTFGSVTGVALGALYPVVNYFI) threads the bilayer. One can recognise a Rieske domain in the interval 71–161 (THPAGDRSLV…VSVENDNVFV (91 aa)). [2Fe-2S] cluster is bound by residues Cys107, His109, Cys125, and His128. Cys112 and Cys127 are disulfide-bonded.

Belongs to the Rieske iron-sulfur protein family. As to quaternary structure, the 4 large subunits of the cytochrome b6-f complex are cytochrome b6, subunit IV (17 kDa polypeptide, PetD), cytochrome f and the Rieske protein, while the 4 small subunits are PetG, PetL, PetM and PetN. The complex functions as a dimer. [2Fe-2S] cluster serves as cofactor.

It localises to the cellular thylakoid membrane. The enzyme catalyses 2 oxidized [plastocyanin] + a plastoquinol + 2 H(+)(in) = 2 reduced [plastocyanin] + a plastoquinone + 4 H(+)(out). Its function is as follows. Component of the cytochrome b6-f complex, which mediates electron transfer between photosystem II (PSII) and photosystem I (PSI), cyclic electron flow around PSI, and state transitions. This Synechococcus sp. (strain WH7803) protein is Cytochrome b6-f complex iron-sulfur subunit.